A 468-amino-acid chain; its full sequence is uncharacterized protein (468 aa).

The next 6 membrane-spanning stretches (helical) occupy residues 59–79 (IPIVIIAVIYSSFIFFFALFI), 135–155 (TWINSILEILALIYSFLLLLV), 215–235 (VFPFTPCPLPLLLFPIFLSIL), 297–317 (THCCLNVFASSAFFVLLMVLV), 348–368 (HFIPLILTVVIELVITGLVSY), and 385–405 (VFTVMFTIIAVFRFVFIIILF).

The protein resides in the membrane. This is an uncharacterized protein from Caenorhabditis elegans.